A 416-amino-acid chain; its full sequence is 3-hydroxy-3-methylglutaryl coenzyme A reductase AN1593 (416 aa).

The Charge relay system role is filled by E103. An N-linked (GlcNAc...) asparagine glycan is attached at N167. K236 acts as the Charge relay system in catalysis. N277 is a glycosylation site (N-linked (GlcNAc...) asparagine). Catalysis depends on D312, which acts as the Charge relay system. A helical transmembrane segment spans residues 380-400; sequence LALLVAAGVLAGELSLCSALS. H408 serves as the catalytic Proton donor.

The protein belongs to the HMG-CoA reductase family.

The protein resides in the membrane. The catalysed reaction is (R)-mevalonate + 2 NADP(+) + CoA = (3S)-3-hydroxy-3-methylglutaryl-CoA + 2 NADPH + 2 H(+). The protein operates within metabolic intermediate biosynthesis; (R)-mevalonate biosynthesis; (R)-mevalonate from acetyl-CoA: step 3/3. 3-hydroxy-3-methylglutaryl coenzyme A reductase; part of the gene cluster that mediates the biosynthesis of the diterpene ent-pimara-8(14),15-diene (PD). Within the cluster, the HMG-CoA reductase AN1593 functions in the mevalonate pathway, which produces isoprenoid precursors. The geranylgeranyl pyrophosphate (GGPP) synthase AN1592 is needed in the formation of GGPP, the precursor for diterpenes. Lastly, the pimaradiene synthase pbcA performs the 2 cyclization steps that convert GGPP to ent-pimara-8(14),15-diene. The putative roles of the remaining cluster enzymes in ent-pimara-8(14),15-diene biosynthesis is unclear. The cytochrome P450 monooxygenase AN1598, the glutathione S-transferase AN1595, the oxidoreductases AN1596 and AN1597 probably function as decorative enzymes. It is possible that in biological conditions the compound is oxidized to ent-pimara-8(14),15-dien-19-oic acid, which is a bioactive diterpene compound predominant in many plant extracts. The polypeptide is 3-hydroxy-3-methylglutaryl coenzyme A reductase AN1593 (Emericella nidulans (strain FGSC A4 / ATCC 38163 / CBS 112.46 / NRRL 194 / M139) (Aspergillus nidulans)).